The primary structure comprises 370 residues: MKFIDEARIEVIAGDGGDGSASMRREKFVPFGGPDGGDGGRGGNVYAIADRNINTLIDYRYAKKHLARNGENGRGSDCYGKGGDDVTLRMPVGTVVTDMDTGELIADLTEHGQQVMLAQGGAGGLGNLHFKSSTNRAPRQKTDGKPGERRMLRLELKVLADVGLLGMPNAGKSTFISSVSNAKPKIADYPFTTLAPNLGVVRVGPSKSFVIADIPGLIEGAAEGAGLGHQFLRHLQRTGVLLHLVDLAPFDENVDPVAEARAIVGELRKYDEALYEKPRWLVLNKLDMVPEDEREARVADFLARFEWDGPVFEISALTGQGCEALCYAIYDYLAEHSDAHRAAEEEDLATDVRFRDAPPADGGATPGDDA.

The region spanning 1–159 (MKFIDEARIE…RMLRLELKVL (159 aa)) is the Obg domain. Residues 160–334 (ADVGLLGMPN…LCYAIYDYLA (175 aa)) form the OBG-type G domain. GTP-binding positions include 166 to 173 (GMPNAGKS), 191 to 195 (FTTLA), 213 to 216 (DIPG), 284 to 287 (NKLD), and 315 to 317 (SAL). The Mg(2+) site is built by serine 173 and threonine 193. A disordered region spans residues 344–370 (EEEDLATDVRFRDAPPADGGATPGDDA).

It belongs to the TRAFAC class OBG-HflX-like GTPase superfamily. OBG GTPase family. In terms of assembly, monomer. Requires Mg(2+) as cofactor.

It is found in the cytoplasm. Functionally, an essential GTPase which binds GTP, GDP and possibly (p)ppGpp with moderate affinity, with high nucleotide exchange rates and a fairly low GTP hydrolysis rate. Plays a role in control of the cell cycle, stress response, ribosome biogenesis and in those bacteria that undergo differentiation, in morphogenesis control. The protein is GTPase Obg of Burkholderia ambifaria (strain ATCC BAA-244 / DSM 16087 / CCUG 44356 / LMG 19182 / AMMD) (Burkholderia cepacia (strain AMMD)).